Consider the following 163-residue polypeptide: Calcium-binding protein I (163 aa).

EF-hand domains lie at 20-42 (DKNKDRQYSIDEIVQLLKKNSKN), 82-117 (KPEIDIESFLLRFDKNNDKMISHHELKTKLDELGCG), and 118-153 (NSKKTTDYVFEQIDTNKEGSLSYEDLEGFVKFLKQD). Residues aspartate 95, asparagine 97, aspartate 99, methionine 101, glutamate 106, aspartate 131, asparagine 133, glutamate 135, serine 137, and aspartate 142 each coordinate Ca(2+).

In Dictyostelium discoideum (Social amoeba), this protein is Calcium-binding protein I (cbpI).